A 54-amino-acid chain; its full sequence is Ribulose bisphosphate carboxylase large chain (54 aa).

A propeptide spanning residues 1-2 is cleaved from the precursor; the sequence is MS. Proline 3 is subject to N-acetylproline. The residue at position 14 (lysine 14) is an N6,N6,N6-trimethyllysine.

This sequence belongs to the RuBisCO large chain family. Type I subfamily. In terms of assembly, heterohexadecamer of 8 large chains and 8 small chains.

It is found in the plastid. The protein resides in the chloroplast. The catalysed reaction is 2 (2R)-3-phosphoglycerate + 2 H(+) = D-ribulose 1,5-bisphosphate + CO2 + H2O. It catalyses the reaction D-ribulose 1,5-bisphosphate + O2 = 2-phosphoglycolate + (2R)-3-phosphoglycerate + 2 H(+). In terms of biological role, ruBisCO catalyzes two reactions: the carboxylation of D-ribulose 1,5-bisphosphate, the primary event in carbon dioxide fixation, as well as the oxidative fragmentation of the pentose substrate in the photorespiration process. Both reactions occur simultaneously and in competition at the same active site. This Magnolia liliiflora (Mulan magnolia) protein is Ribulose bisphosphate carboxylase large chain (rbcL).